The sequence spans 335 residues: tRNA N6-adenosine threonylcarbamoyltransferase (335 aa).

His-109, His-113, and Tyr-130 together coordinate a divalent metal cation. Substrate contacts are provided by residues 130 to 134, Asp-162, Gly-177, Glu-181, and Asn-266; that span reads YVSGG. Residue Asp-294 participates in a divalent metal cation binding.

Belongs to the KAE1 / TsaD family. Component of the EKC/KEOPS complex composed of at least GON7, TP53RK, TPRKB, OSGEP and LAGE3; the whole complex dimerizes. A divalent metal cation serves as cofactor.

Its subcellular location is the cytoplasm. It is found in the nucleus. The catalysed reaction is L-threonylcarbamoyladenylate + adenosine(37) in tRNA = N(6)-L-threonylcarbamoyladenosine(37) in tRNA + AMP + H(+). Functionally, component of the EKC/KEOPS complex that is required for the formation of a threonylcarbamoyl group on adenosine at position 37 (t(6)A37) in tRNAs that read codons beginning with adenine. The complex is probably involved in the transfer of the threonylcarbamoyl moiety of threonylcarbamoyl-AMP (TC-AMP) to the N6 group of A37. OSGEP likely plays a direct catalytic role in this reaction, but requires other protein(s) of the complex to fulfill this activity. This chain is tRNA N6-adenosine threonylcarbamoyltransferase, found in Bos taurus (Bovine).